Consider the following 178-residue polypeptide: Cysteine-rich venom protein VAR3 (178 aa).

Residues 1 to 22 (MILLKLYLTLAAILCQSRGTTS) form the signal peptide. Positions 41-169 (NKHNDLRRTV…PLKYFLVCQY (129 aa)) constitute an SCP domain. 3 disulfide bridges follow: Cys-77–Cys-156, Cys-95–Cys-170, and Cys-151–Cys-167.

This sequence belongs to the CRISP family. Contains 8 disulfide bonds. Expressed by the venom gland.

The protein resides in the secreted. Functionally, blocks ryanodine receptors, and potassium channels. This chain is Cysteine-rich venom protein VAR3, found in Varanus acanthurus (Ridge-tailed monitor).